Here is a 163-residue protein sequence, read N- to C-terminus: HTH-type transcriptional regulator IscR (163 aa).

In terms of domain architecture, HTH rrf2-type spans 2–131 (RLTSKGRYAV…NNITLGELVN (130 aa)). A DNA-binding region (H-T-H motif) is located at residues 28–51 (LADISERQGISLSYLEQLFSRLRK). [2Fe-2S] cluster-binding residues include Cys-92, Cys-98, and Cys-104.

Requires [2Fe-2S] cluster as cofactor.

Its function is as follows. Regulates the transcription of several operons and genes involved in the biogenesis of Fe-S clusters and Fe-S-containing proteins. This chain is HTH-type transcriptional regulator IscR, found in Klebsiella pneumoniae subsp. pneumoniae (strain ATCC 700721 / MGH 78578).